The chain runs to 460 residues: Bifunctional protein GlmU (460 aa).

Residues 1-235 (MTLTAAIVLA…PLSVEGVNDR (235 aa)) form a pyrophosphorylase region. UDP-N-acetyl-alpha-D-glucosamine contacts are provided by residues 9 to 12 (LAAG), Lys-23, Gln-76, and 81 to 82 (GT). Asp-109 contributes to the Mg(2+) binding site. 4 residues coordinate UDP-N-acetyl-alpha-D-glucosamine: Gly-146, Glu-161, Asn-176, and Asn-233. A Mg(2+)-binding site is contributed by Asn-233. The linker stretch occupies residues 236–256 (VQLASLAKAHNLRVCRQWMLD). Residues 257-460 (GVTIVDPQTT…VDNWKPAWER (204 aa)) form an N-acetyltransferase region. UDP-N-acetyl-alpha-D-glucosamine is bound by residues Arg-338 and Lys-356. His-368 acts as the Proton acceptor in catalysis. UDP-N-acetyl-alpha-D-glucosamine is bound by residues Tyr-371 and Asn-382. Residues 391–392 (NY) and Ala-428 contribute to the acetyl-CoA site.

It in the N-terminal section; belongs to the N-acetylglucosamine-1-phosphate uridyltransferase family. This sequence in the C-terminal section; belongs to the transferase hexapeptide repeat family. Homotrimer. It depends on Mg(2+) as a cofactor.

The protein localises to the cytoplasm. It catalyses the reaction alpha-D-glucosamine 1-phosphate + acetyl-CoA = N-acetyl-alpha-D-glucosamine 1-phosphate + CoA + H(+). The enzyme catalyses N-acetyl-alpha-D-glucosamine 1-phosphate + UTP + H(+) = UDP-N-acetyl-alpha-D-glucosamine + diphosphate. The protein operates within nucleotide-sugar biosynthesis; UDP-N-acetyl-alpha-D-glucosamine biosynthesis; N-acetyl-alpha-D-glucosamine 1-phosphate from alpha-D-glucosamine 6-phosphate (route II): step 2/2. It participates in nucleotide-sugar biosynthesis; UDP-N-acetyl-alpha-D-glucosamine biosynthesis; UDP-N-acetyl-alpha-D-glucosamine from N-acetyl-alpha-D-glucosamine 1-phosphate: step 1/1. Its pathway is bacterial outer membrane biogenesis; LPS lipid A biosynthesis. Its function is as follows. Catalyzes the last two sequential reactions in the de novo biosynthetic pathway for UDP-N-acetylglucosamine (UDP-GlcNAc). The C-terminal domain catalyzes the transfer of acetyl group from acetyl coenzyme A to glucosamine-1-phosphate (GlcN-1-P) to produce N-acetylglucosamine-1-phosphate (GlcNAc-1-P), which is converted into UDP-GlcNAc by the transfer of uridine 5-monophosphate (from uridine 5-triphosphate), a reaction catalyzed by the N-terminal domain. The chain is Bifunctional protein GlmU from Bifidobacterium animalis subsp. lactis (strain AD011).